Consider the following 1014-residue polypeptide: 2-oxoglutarate dehydrogenase, mitochondrial (1014 aa).

A mitochondrion-targeting transit peptide spans 1–30 (MLRFVSSQTCRYSSRGLLKTSLLKNASTVK). 4 residues coordinate thiamine diphosphate: arginine 306, aspartate 406, asparagine 439, and isoleucine 441. Positions 406, 439, and 441 each coordinate Mg(2+).

Belongs to the alpha-ketoglutarate dehydrogenase family. Component of the 2-oxoglutarate dehydrogenase complex (OGDC), also called alpha-ketoglutarate dehydrogenase (KGDH) complex. The copmplex is composed of the catalytic subunits OGDH (2-oxoglutarate dehydrogenase KGD1; also called E1 subunit), DLST (dihydrolipoamide succinyltransferase KGD2; also called E2 subunit) and DLD (dihydrolipoamide dehydrogenase LPD1; also called E3 subunit), and the assembly factor KGD4. The cofactor is thiamine diphosphate. Mg(2+) serves as cofactor.

Its subcellular location is the mitochondrion. It is found in the mitochondrion matrix. It localises to the mitochondrion nucleoid. It carries out the reaction N(6)-[(R)-lipoyl]-L-lysyl-[protein] + 2-oxoglutarate + H(+) = N(6)-[(R)-S(8)-succinyldihydrolipoyl]-L-lysyl-[protein] + CO2. Its activity is regulated as follows. Catabolite repressed. The 2-oxoglutarate dehydrogenase complex catalyzes the overall conversion of 2-oxoglutarate to succinyl-CoA and CO(2). It contains multiple copies of three enzymatic components: 2-oxoglutarate dehydrogenase (E1), dihydrolipoamide succinyltransferase (E2) and lipoamide dehydrogenase (E3). In Saccharomyces cerevisiae (strain ATCC 204508 / S288c) (Baker's yeast), this protein is 2-oxoglutarate dehydrogenase, mitochondrial (KGD1).